Reading from the N-terminus, the 868-residue chain is MNPGEMRPSACLLLLAGLQLSILVPTEANDFSSFLSANASLAVVVDHEYMTVHGENILAHFEKILSDVIRENLRNGGINVKYFSWNAVRLKKDFLAAITVTDCENTWNFYKNTQETSILLIAITDSDCPRLPLNRALMVPIVENGDEFPQLILDAKVQQILNWKTAVVFVDQTILEENALLVKSIVHESITNHITPISLILYEINDSLRGQQKRVALRQALSQFAPKKHEEMRQQFLVISAFHEDIIEIAETLNMFHVGNQWMIFVLDMVARDFDAGTVTINLDEGANIAFALNETDPNCQDSLNCTISEISLALVNAISKITVEEESIYGEISDEEWEAIRFTKQEKQAEILEYMKEFLKTNAKCSSCARWRVETAITWGKSQENRKFRSTPQRDAKNRNFEFINIGYWTPVLGFVCQELAFPHIEHHFRNITMDILTVHNPPWQILTKNSNGVIVEHKGIVMEIVKELSRALNFSYYLHEASAWKEEDSLSTSAGGNESDELVGSMTFRIPYRVVEMVQGNQFFIAAVAATVEDPDQKPFNYTQPISVQKYSFITRKPDEVSRIYLFTAPFTVETWFCLMGIILLTAPTLYAINRLAPLKEMRIVGLSTVKSCFWYIFGALLQQGGMYLPTADSGRLVVGFWWIVVIVLVTTYCGNLVAFLTFPKFQPGVDYLNQLEDHKDIVQYGLRNGTFFERYVQSTTREDFKHYLERAKIYGSAQEEDIEAVKRGERINIDWRINLQLIVQRHFEREKECHFALGRESFVDEQIAMIVPAQSAYLHLVNRHIKSMFRMGFIERWHQMNLPSAGKCNGKSAQRQVTNHKVNMDDMQGCFLVLLLGFTLALLIVCGEFWYRRFRASRKRRQFTN.

A signal peptide spans 1–28; that stretch reads MNPGEMRPSACLLLLAGLQLSILVPTEA. Over 29-565 the chain is Extracellular; it reads NDFSSFLSAN…ITRKPDEVSR (537 aa). N-linked (GlcNAc...) asparagine glycans are attached at residues Asn38, Asn205, Asn294, Asn305, Asn432, Asn475, Asn499, and Asn543. Residues 566 to 586 traverse the membrane as a helical segment; it reads IYLFTAPFTVETWFCLMGIIL. Over 587 to 642 the chain is Cytoplasmic; it reads LTAPTLYAINRLAPLKEMRIVGLSTVKSCFWYIFGALLQQGGMYLPTADSGRLVVG. A helical membrane pass occupies residues 643-663; it reads FWWIVVIVLVTTYCGNLVAFL. Topologically, residues 664 to 832 are extracellular; it reads TFPKFQPGVD…HKVNMDDMQG (169 aa). N-linked (GlcNAc...) asparagine glycosylation occurs at Asn691. The chain crosses the membrane as a helical span at residues 833–853; the sequence is CFLVLLLGFTLALLIVCGEFW. Topologically, residues 854-868 are cytoplasmic; the sequence is YRRFRASRKRRQFTN.

The protein belongs to the glutamate-gated ion channel (TC 1.A.10.1) family. In terms of tissue distribution, in the antenna, detected in sacculus neurons which innervate the first and second chambers (at protein level). Expressed in multiple cells of the larval dorsal organ ganglion, including the dorsal organ cool cells where it is predominately localized to the dendritic bulbs (at protein level).

The protein resides in the cell membrane. Integral part of various neural sensory systems in the antenna that provide the neural basis for the response to environmental changes in temperature (thermosensation) and humidity (hygrosensation). Together with Ir21a and Ir25a, mediates the response of the larval dorsal organ cool cells, a trio of cool-responsive neurons, to cooling and is required for cool avoidance behavior. Together with Ir25a and Ir40a, mediates the response of the hydrosensory sacculus neurons to changes in relative humidity, and is required for dry detection and humidiy preference behavior. The polypeptide is Ionotropic receptor 93a (Drosophila melanogaster (Fruit fly)).